Consider the following 172-residue polypeptide: Protein LOL2 (172 aa).

Putative zinc finger regions lie at residues 4-34 (QIVC…VSST), 44-74 (HLIC…VNLV), and 82-112 (HLNC…ITNT).

It localises to the nucleus. Its function is as follows. Putative zinc finger that may be involved in programmed cell death and defense response. The protein is Protein LOL2 (LOL2) of Oryza sativa subsp. japonica (Rice).